The following is a 333-amino-acid chain: MAEGPYGRPVTASLTWQPTLSAADVDDIVSLLATAERADGTGPVSEDVRLTLRPDQRVGAARHLLAVSATGVEASGPRRPIVGYAHLGGALDSRQAEIVVDPGHRGLGIGRALATALTEALGDPPARLDVWAHGDLPPAAALAARLGFARTRVLFQLRRPLGAVAPLPEPQLPAGVTVRAFVPGRDDEAWLAVNAAAFADHPEQGRWTLDDLALRRAEPWFDPRGFFVAERDGQLVGFHWTKIHEVDETPPPGTRPGPIGEVYVVGVLPGAGGAGLGRALTLIGLRHLQAEGLAAVLLYVDEDNERAVRMYTGLDFTVHTRDVSYHWRGAAAD.

2 N-acetyltransferase domains span residues 18-170 and 176-333; these read PTLS…LPEP and VTVR…AAAD. 1D-myo-inositol 2-(L-cysteinylamino)-2-deoxy-alpha-D-glucopyranoside is bound at residue E46. 98-100 contacts acetyl-CoA; it reads IVV. E203, K242, and E261 together coordinate 1D-myo-inositol 2-(L-cysteinylamino)-2-deoxy-alpha-D-glucopyranoside. Residues 265–267 and 272–278 contribute to the acetyl-CoA site; these read VGV and GGAGLGR. Y299 provides a ligand contact to 1D-myo-inositol 2-(L-cysteinylamino)-2-deoxy-alpha-D-glucopyranoside. 304-309 serves as a coordination point for acetyl-CoA; it reads NERAVR.

The protein belongs to the acetyltransferase family. MshD subfamily. As to quaternary structure, monomer.

The catalysed reaction is 1D-myo-inositol 2-(L-cysteinylamino)-2-deoxy-alpha-D-glucopyranoside + acetyl-CoA = mycothiol + CoA + H(+). Its function is as follows. Catalyzes the transfer of acetyl from acetyl-CoA to desacetylmycothiol (Cys-GlcN-Ins) to form mycothiol. The chain is Mycothiol acetyltransferase from Frankia alni (strain DSM 45986 / CECT 9034 / ACN14a).